The following is a 307-amino-acid chain: CRISPR-associated endonuclease Cas1 2 (307 aa).

3 residues coordinate Mn(2+): Glu142, His206, and Glu221.

This sequence belongs to the CRISPR-associated endonuclease Cas1 family. In terms of assembly, homodimer, forms a heterotetramer with a Cas2 homodimer. Forms oligomers, probably binds nucleic acids as a homodimer. Requires Mg(2+) as cofactor. The cofactor is Mn(2+).

CRISPR (clustered regularly interspaced short palindromic repeat), is an adaptive immune system that provides protection against mobile genetic elements (viruses, transposable elements and conjugative plasmids). CRISPR clusters contain spacers, sequences complementary to antecedent mobile elements, and target invading nucleic acids. CRISPR clusters are transcribed and processed into CRISPR RNA (crRNA). Acts as a dsDNA endonuclease. Involved in the integration of spacer DNA into the CRISPR cassette. Its function is as follows. In vitro catalyzes a concerted transesterification reaction on branched DNA, as would be expected during integration of protospacers into the CRISPR leader sequence; Cas2 is not required in vitro. This reaction requires a 3'-OH group at the branch point. Binds ss- and dsDNA and ss- and dsRNA with approximately equal affinity. May be able to anneal complementary DNA strands. The polypeptide is CRISPR-associated endonuclease Cas1 2 (Saccharolobus solfataricus (strain ATCC 35092 / DSM 1617 / JCM 11322 / P2) (Sulfolobus solfataricus)).